A 105-amino-acid polypeptide reads, in one-letter code: MKYHFSSMEPWWKREFSFCIPAIYIKMASISLFQNSWLKMKHLPSCLFTQTTNTLGIYRKKKPNHSRDNPRINSNLSTNYAQAKSVERSRSNSLNSGPNPLENAT.

A disordered region spans residues 58 to 105 (YRKKKPNHSRDNPRINSNLSTNYAQAKSVERSRSNSLNSGPNPLENAT). Composition is skewed to polar residues over residues 71-82 (RINSNLSTNYAQ) and 91-105 (SNSLNSGPNPLENAT).

The protein localises to the mitochondrion. This is an uncharacterized protein from Arabidopsis thaliana (Mouse-ear cress).